Here is a 510-residue protein sequence, read N- to C-terminus: MRGAYYVLTALFVVTSSDIAAESDHPLHNFNHHVITAGNAVVKALPNRSLRGSRDGRNDLANEERSISSFLANMIDEGVAKLPLVAEIIKTKPLAAKAVKQKPRAMKKKFRAAKAVEEKSRPAKAAKKTPRAAKAAKKTPPQAKVVDEILYGVEATKEMGKSEEYGVLKAATEGADQALKKHWDPSRETAVIVAPSRDISGNVILSLRKWKVGFNGMRPMVVLDKHKDNIDRVHGAFGTLCDKNMQITPVETSYLWSMLDWNIEKNFKKKHKQTLVRLAQRYVLIGLRQVKKDRKVWNQWKKLPDPLKFGVLNYLLNLHYQRWVRMYNIFRRYRPDQNGVPSTLGGNANINRALALQKHSKVRSVFPYEPFDVAWASKGRRSVLSKRSRRTFDGNTDTASLPSKQLKTRSSESSMPPLIESTTSGDDSVPTKEIKSSFDDPKSAFAPFKPGDDFVHTENSRLSFGGLSSAFVPYRRPNVHNSQSLTSPITVSSMPSLMKSTTSGDGLRPY.

A signal peptide spans 1 to 20 (MRGAYYVLTALFVVTSSDIA). The N-linked (GlcNAc...) asparagine glycan is linked to Asn47. The RxLR-dEER signature appears at 48 to 65 (RSLRGSRDGRNDLANEER). Disordered regions lie at residues 111 to 139 (RAAK…AKKT) and 386 to 442 (KRSR…DDPK). The segment covering 122-137 (PAKAAKKTPRAAKAAK) has biased composition (basic residues). Residues 393–405 (DGNTDTASLPSKQ) are compositionally biased toward polar residues. Over residues 429–442 (VPTKEIKSSFDDPK) the composition is skewed to basic and acidic residues.

The protein belongs to the RxLR effector family.

The protein resides in the secreted. It is found in the host nucleus. Its function is as follows. Secreted effector that completely suppresses the host cell death induced by cell death-inducing proteins. This Plasmopara viticola (Downy mildew of grapevine) protein is Secreted RxLR effector protein 108.